We begin with the raw amino-acid sequence, 386 residues long: Enoyl-[acyl-carrier-protein] reductase 2, mitochondrial (386 aa).

The N-terminal 22 residues, 1–22 (MYSVLKQSIRPRLLATHNQFRT), are a transit peptide targeting the mitochondrion. The active-site Proton donor is the Y79. Residues N172, 199–202 (TSAV), 222–224 (RDR), 296–299 (YGGM), 321–323 (FWV), and K381 contribute to the NADP(+) site.

This sequence belongs to the zinc-containing alcohol dehydrogenase family. Quinone oxidoreductase subfamily. As to quaternary structure, homodimer and heterodimer with ETR1.

It localises to the mitochondrion. It catalyses the reaction a 2,3-saturated acyl-[ACP] + NADP(+) = a (2E)-enoyl-[ACP] + NADPH + H(+). Its function is as follows. Required for respiration and the maintenance of the mitochondrial compartment. Oxidoreductase with a preference for short and medium chain substrates, including trans-2-hexenoyl-CoA (C6), trans-2-decenoyl-CoA (C10), and trans-2-hexadecenoyl-CoA (C16). May play a role in mitochondrial fatty acid synthesis. This chain is Enoyl-[acyl-carrier-protein] reductase 2, mitochondrial (ETR2), found in Candida tropicalis (Yeast).